Consider the following 505-residue polypeptide: Maturase K (505 aa).

Belongs to the intron maturase 2 family. MatK subfamily.

It is found in the plastid. Its subcellular location is the chloroplast. Usually encoded in the trnK tRNA gene intron. Probably assists in splicing its own and other chloroplast group II introns. The chain is Maturase K from Elaeagnus umbellata (Autumn olive).